A 688-amino-acid chain; its full sequence is Small ribosomal subunit protein mS39 (688 aa).

A mitochondrion-targeting transit peptide spans 1–37; the sequence is MASVASARWLRVSCGLCVPLTARRAGPCGRTPSSRFY. The residue at position 126 (K126) is an N6-acetyllysine. PPR repeat units lie at residues 149–183, 184–219, 258–292, 293–333, 334–370, 371–412, 415–449, 457–491, 492–526, and 575–609; these read IEEI…GTTV, SLET…EELE, NAHS…RLRA, DVHT…NVKP, NLQT…GIEP, SLAT…SPKD, DDMF…DNRK, RNFY…VFFP, HSQT…GHTF, and PANS…NKIP. The tract at residues 667–688 is disordered; it reads GDLTALTSDSESDSDSDTSKDK.

The protein belongs to the mitochondrion-specific ribosomal protein mS39 family. In terms of assembly, component of the mitochondrial ribosome small subunit (28S) which comprises a 12S rRNA and about 30 distinct proteins. Associated with the 12S mitochondrial rRNA (12S mt-rRNA).

The protein resides in the mitochondrion. In terms of biological role, mitochondrial RNA-binding protein that has a role in mitochondrial translation. This is Small ribosomal subunit protein mS39 (PTCD3) from Bos taurus (Bovine).